The chain runs to 262 residues: Acyl-[acyl-carrier-protein]--UDP-N-acetylglucosamine O-acyltransferase (262 aa).

It belongs to the transferase hexapeptide repeat family. LpxA subfamily. Homotrimer.

The protein localises to the cytoplasm. It catalyses the reaction a (3R)-hydroxyacyl-[ACP] + UDP-N-acetyl-alpha-D-glucosamine = a UDP-3-O-[(3R)-3-hydroxyacyl]-N-acetyl-alpha-D-glucosamine + holo-[ACP]. It functions in the pathway glycolipid biosynthesis; lipid IV(A) biosynthesis; lipid IV(A) from (3R)-3-hydroxytetradecanoyl-[acyl-carrier-protein] and UDP-N-acetyl-alpha-D-glucosamine: step 1/6. Involved in the biosynthesis of lipid A, a phosphorylated glycolipid that anchors the lipopolysaccharide to the outer membrane of the cell. This Herminiimonas arsenicoxydans protein is Acyl-[acyl-carrier-protein]--UDP-N-acetylglucosamine O-acyltransferase.